Consider the following 364-residue polypeptide: NAD(P)H-quinone oxidoreductase subunit 1, chloroplastic (364 aa).

6 helical membrane-spanning segments follow: residues 27–47, 98–118, 127–147, 255–275, 301–321, and 337–357; these read IWLL…VLVI, FSVG…VIPF, ISIG…GLLM, GLFY…VTVL, VFGS…FLFV, and LLNL…LLTT.

This sequence belongs to the complex I subunit 1 family. As to quaternary structure, NDH is composed of at least 16 different subunits, 5 of which are encoded in the nucleus.

Its subcellular location is the plastid. It is found in the chloroplast thylakoid membrane. It carries out the reaction a plastoquinone + NADH + (n+1) H(+)(in) = a plastoquinol + NAD(+) + n H(+)(out). It catalyses the reaction a plastoquinone + NADPH + (n+1) H(+)(in) = a plastoquinol + NADP(+) + n H(+)(out). Its function is as follows. NDH shuttles electrons from NAD(P)H:plastoquinone, via FMN and iron-sulfur (Fe-S) centers, to quinones in the photosynthetic chain and possibly in a chloroplast respiratory chain. The immediate electron acceptor for the enzyme in this species is believed to be plastoquinone. Couples the redox reaction to proton translocation, and thus conserves the redox energy in a proton gradient. The chain is NAD(P)H-quinone oxidoreductase subunit 1, chloroplastic from Illicium oligandrum (Star anise).